The primary structure comprises 110 residues: Small ribosomal subunit protein bS16 (110 aa).

Residues 87 to 110 (ARQNPIKAVPRKERKAQAEAAAKG) form a disordered region.

The protein belongs to the bacterial ribosomal protein bS16 family.

This chain is Small ribosomal subunit protein bS16, found in Bradyrhizobium sp. (strain BTAi1 / ATCC BAA-1182).